The sequence spans 270 residues: UPF0246 protein PsycPRwf_0637 (270 aa).

The protein belongs to the UPF0246 family.

The polypeptide is UPF0246 protein PsycPRwf_0637 (Psychrobacter sp. (strain PRwf-1)).